The sequence spans 179 residues: Large ribosomal subunit protein uL6 (179 aa).

Belongs to the universal ribosomal protein uL6 family. Part of the 50S ribosomal subunit.

Its function is as follows. This protein binds to the 23S rRNA, and is important in its secondary structure. It is located near the subunit interface in the base of the L7/L12 stalk, and near the tRNA binding site of the peptidyltransferase center. The protein is Large ribosomal subunit protein uL6 of Clostridium acetobutylicum (strain ATCC 824 / DSM 792 / JCM 1419 / IAM 19013 / LMG 5710 / NBRC 13948 / NRRL B-527 / VKM B-1787 / 2291 / W).